The sequence spans 219 residues: Octanoyltransferase (219 aa).

The BPL/LPL catalytic domain maps to 31-219; that stretch reads EDLPGFLVFC…KLKRRLLEVL (189 aa). Substrate contacts are provided by residues 69–76, 153–155, and 166–168; these read RGGRATYH, SVG, and GAA. The Acyl-thioester intermediate role is filled by Cys-184.

The protein belongs to the LipB family.

Its subcellular location is the cytoplasm. It carries out the reaction octanoyl-[ACP] + L-lysyl-[protein] = N(6)-octanoyl-L-lysyl-[protein] + holo-[ACP] + H(+). The protein operates within protein modification; protein lipoylation via endogenous pathway; protein N(6)-(lipoyl)lysine from octanoyl-[acyl-carrier-protein]: step 1/2. In terms of biological role, catalyzes the transfer of endogenously produced octanoic acid from octanoyl-acyl-carrier-protein onto the lipoyl domains of lipoate-dependent enzymes. Lipoyl-ACP can also act as a substrate although octanoyl-ACP is likely to be the physiological substrate. The chain is Octanoyltransferase from Bdellovibrio bacteriovorus (strain ATCC 15356 / DSM 50701 / NCIMB 9529 / HD100).